Reading from the N-terminus, the 607-residue chain is Monocarboxylate transporter 7 (607 aa).

Residues 1 to 84 (MRASGQGPQR…PAETGCSRSR (84 aa)) form a disordered region. Residues 1 to 105 (MRASGQGPQR…ANVYTQVPDG (105 aa)) lie on the Cytoplasmic side of the membrane. A helical transmembrane segment spans residues 106 to 126 (GWGWAVAVSFFFVEVFTYGII). The Extracellular segment spans residues 127 to 146 (KSFGVFFNDLMDSFDESNSK). Residues 147–167 (ISWIISICVFVLTFTAPLSTV) traverse the membrane as a helical segment. The Cytoplasmic portion of the chain corresponds to 168-175 (LSNRFGHR). The helical transmembrane segment at 176–196 (LVVMAGGLLISLGMITASFSQ) threads the bilayer. Residues 197 to 202 (RVYHMY) are Extracellular-facing. Residues 203–223 (ISIGVISGLGYCFSFLPTVTI) traverse the membrane as a helical segment. Residues 224-233 (LSQYFDKRRS) are Cytoplasmic-facing. The helical transmembrane segment at 234 to 254 (VVTAVASTGECFAVFAFAPAI) threads the bilayer. The Extracellular portion of the chain corresponds to 255–268 (TALKEHIGWRYSLL). The chain crosses the membrane as a helical span at residues 269 to 289 (FVGLLQLNIMVCGALLRPIII). Residues 290–383 (QGPGQSPKAV…KEKSFICYAL (94 aa)) lie on the Cytoplasmic side of the membrane. Phosphoserine is present on residues Ser319, Ser322, Ser325, and Ser332. A helical membrane pass occupies residues 384-404 (FGLFATLGFFAPSLYIIPLGI). At 405–414 (SLGIDPDRAA) the chain is on the extracellular side. A helical membrane pass occupies residues 415–435 (FLLSTMAIAEVFGRIGAGFVL). Over 436–442 (NREPIRK) the chain is Cytoplasmic. A helical membrane pass occupies residues 443 to 463 (IYIELICVILLTASLFAFTFA). Topologically, residues 464–465 (TE) are extracellular. The helical transmembrane segment at 466–486 (FWGLMLCSVFFGSMVGTIGGT) threads the bilayer. Topologically, residues 487-507 (HIPMLAEDDVVGIEKMSSAAG) are cytoplasmic. Residues 508–528 (VYVFIQSISGLAGPPLAGLLV) form a helical membrane-spanning segment. Over 529–536 (DQSKIYSR) the chain is Extracellular. The chain crosses the membrane as a helical span at residues 537 to 557 (AFYSCAAGMCLAAVCLALVRP). Residues 558–607 (CKKGLCQNSHSGENQTDRQRGKALQDIPEDFLEMDLGKCEHRAHMKMDPV) are Cytoplasmic-facing.

It belongs to the major facilitator superfamily. Monocarboxylate porter (TC 2.A.1.13) family. Forms functional complexes with BSG/CD147 or EMB/GP70 ancillary proteins.

It localises to the basolateral cell membrane. It carries out the reaction taurine(out) = taurine(in). Functionally, monocarboxylate transporter selective for taurine. May associate with BSG/CD147 or EMB/GP70 ancillary proteins to mediate facilitative efflux or influx of taurine across the plasma membrane. The transport is pH- and sodium-independent. Rather low-affinity, is likely effective for taurine transport in tissues where taurine is present at high concentrations. In Mus musculus (Mouse), this protein is Monocarboxylate transporter 7.